Here is an 85-residue protein sequence, read N- to C-terminus: Small ribosomal subunit protein uS17 (85 aa).

This sequence belongs to the universal ribosomal protein uS17 family. In terms of assembly, part of the 30S ribosomal subunit.

One of the primary rRNA binding proteins, it binds specifically to the 5'-end of 16S ribosomal RNA. The chain is Small ribosomal subunit protein uS17 from Trichlorobacter lovleyi (strain ATCC BAA-1151 / DSM 17278 / SZ) (Geobacter lovleyi).